The following is a 329-amino-acid chain: Ankyrin repeat and SOCS box protein 5 (329 aa).

ANK repeat units follow at residues 69–98, 102–131, 135–164, 167–196, 200–229, and 232–261; these read ADRS…NVNA, DHVT…NANA, DGVT…KAQL, CFPS…DVDQ, HLGT…DVHK, and YWDT…DINA. An SOCS box domain is found at 278-329; that stretch reads AVERILLQHEATPSSLCQLCRLCIRNYIGRQRFHLIPQLQLPTLLQNFLQYR.

Belongs to the ankyrin SOCS box (ASB) family.

The protein operates within protein modification; protein ubiquitination. May be a substrate-recognition component of a SCF-like ECS (Elongin-Cullin-SOCS-box protein) E3 ubiquitin-protein ligase complex which mediates the ubiquitination and subsequent proteasomal degradation of target proteins. May play a role in the initiation of arteriogenesis. This chain is Ankyrin repeat and SOCS box protein 5 (Asb5), found in Mus musculus (Mouse).